A 307-amino-acid chain; its full sequence is Elongation factor Ts (307 aa).

The interval 80–83 (TDFV) is involved in Mg(2+) ion dislocation from EF-Tu.

Belongs to the EF-Ts family.

It is found in the cytoplasm. Associates with the EF-Tu.GDP complex and induces the exchange of GDP to GTP. It remains bound to the aminoacyl-tRNA.EF-Tu.GTP complex up to the GTP hydrolysis stage on the ribosome. The chain is Elongation factor Ts from Methylobacterium sp. (strain 4-46).